Reading from the N-terminus, the 360-residue chain is Peptide chain release factor 1 (360 aa).

An N5-methylglutamine modification is found at Q237.

This sequence belongs to the prokaryotic/mitochondrial release factor family. In terms of processing, methylated by PrmC. Methylation increases the termination efficiency of RF1.

It localises to the cytoplasm. Peptide chain release factor 1 directs the termination of translation in response to the peptide chain termination codons UAG and UAA. In Ectopseudomonas mendocina (strain ymp) (Pseudomonas mendocina), this protein is Peptide chain release factor 1.